Here is a 592-residue protein sequence, read N- to C-terminus: Arginine--tRNA ligase (592 aa).

The 'HIGH' region signature appears at 112–122 (VNPNKELHVGH).

It belongs to the class-I aminoacyl-tRNA synthetase family. Monomer.

Its subcellular location is the cytoplasm. It catalyses the reaction tRNA(Arg) + L-arginine + ATP = L-arginyl-tRNA(Arg) + AMP + diphosphate. This chain is Arginine--tRNA ligase, found in Thermus thermophilus (strain ATCC BAA-163 / DSM 7039 / HB27).